The primary structure comprises 315 residues: Mitochondrial glycine transporter (315 aa).

Solcar repeat units lie at residues 19 to 102 (SKTT…LRTG), 125 to 206 (TANL…LKRR), and 221 to 305 (KSSS…LILR). 6 helical membrane-spanning segments follow: residues 25–50 (FTAG…TRVQ), 77–103 (GTLP…RTGL), 128–153 (LATG…VRYE), 181–204 (GFGA…EQLK), 225–251 (INFV…KTRL), and 280–298 (GLGL…AWTV).

Belongs to the mitochondrial carrier (TC 2.A.29) family. SLC25A38 subfamily.

It is found in the mitochondrion inner membrane. It catalyses the reaction glycine(in) = glycine(out). Its function is as follows. Mitochondrial glycine transporter that imports glycine into the mitochondrial matrix. Plays an important role in providing glycine for the first enzymatic step in heme biosynthesis, the condensation of glycine with succinyl-CoA to produce 5-aminolevulinate (ALA) in the mitochondrial matrix. The chain is Mitochondrial glycine transporter from Aspergillus niger (strain ATCC MYA-4892 / CBS 513.88 / FGSC A1513).